A 1340-amino-acid polypeptide reads, in one-letter code: MLKIGICSSITISNSISNSYHSPSTSTVVVGNQLQQQQQQQQYVQQQLQYQYDSLNQSQTSPNSNDGNIGGGSGGGNNAGSNIGIGGGGGGNNNNIGGGGGSGGGVNIGSGSGGGGSGSNSNIGGGGGGGQLGMNGMNGSNMLLINQNIPTIKSTDSIGSTVSINSTGVSLQYNSLSSTIGSPSSLSLLSPIISNPFSSTLPNQSYMVNQILFNCLCFHPKSPILYAAIRNEVHFYDIITKSVIGKLFIDPTETIRHLITLPGNSIQTPTFLLAFTQEGVIYLWDPETHKLQTIVHQLKLDDKRPITCKSAAPNKPVIFFSKNESKDIVVVDFHNKGSSPFKLKGHKKPISAIAHHPAKTILASCSTDGQLKIWDTRNNMSFLNFEEFSSYENTRNIEHSNHYFLVFEPTGKYLVMTGSSGLTLVYGDLTSQNPQEVIANGFICKGQNILSIVHHPQLPLFFVLSIGPSGYEELSSWEINNQYKTIVQSPLIPTFIPEINDSLSYLSKYSKPLTIPKFNPVSIVIHPTKNYFSLQLEASSNISSTISPYPSNINSQPFSSIRHINQNIYSINSYDHLNHSFPLVSKLPLPMGFFFEPENTFNYPSEITFFDGTYVKSYLPLNGITKKLIDTPIMVNSASGMGSGGGEDISKGKKFLFNNEFQLFALIYDSFSVAAQAQLSKYLIMDLQGLVNQQGDGSDCVFIGNNQQILILGLDGKLAKVATLSKQGVSSFKNFTLVPRITSVHSTPLGGNKVVLYFCQEKSCLVFSKNVNQSDPSCKDNYMVDIDGDNGILQLQPNEKVFQIEWQSDPKSSQHICAILTNQRIIITNSRLRIINQIHSPPNHHQSTSSYFQSIFWLEWTLLYTTSTHLMYMTLQNNQAPKPISTLSISPIILSTILPDRMIFGYQGLQVPGKNETTVRCQAIGILECLIIGLLSLPPFIQYEKKYLSSCLQNIVQKLDYTRISKHVLDKLRERSFTDLAYSLSNDMKISQSKQSSLEKFRMAWISKQYEAANRHLSIEFNRISIIKNPNDTEKRQFNKLKENMRDFGRECMNAGHYLLAKDCFQKLSEHIYLLQISILLNDRDSVIAIKRDAELRGDDHVLLAACDKYLNKQNKSINKVNPPVVKILPWDPTATTNVSMKSGLDYLSPINLNSIQRYYPISLPFSGASASLNGGKHKLLRPPEESWPPEDFKHSVAITPPRTLMSLVANRLSTKSHMSSTTTLRRSPSIENIRTTSTTFDSSKFNTDNQELFDDDSDDDSDSGADADVDSENEEDRKLVMTVPASLQHNDNSSLTNITVTDNDSNLDQDITSNTGSDIADLNDTQLSSTPTPTTTLSS.

The segment covering 56–67 (NQSQTSPNSNDG) has biased composition (low complexity). Disordered regions lie at residues 56 to 75 (NQSQ…GSGG) and 110 to 131 (SGSG…GGGQ). 4 WD repeats span residues 208 to 246 (VNQI…VIGK), 250 to 294 (DPTE…LQTI), 345 to 384 (GHKK…SFLN), and 397 to 436 (IEHS…NPQE). Polar residues predominate over residues 1216-1251 (KSHMSSTTTLRRSPSIENIRTTSTTFDSSKFNTDNQ). Residues 1216–1340 (KSHMSSTTTL…TPTPTTTLSS (125 aa)) are disordered. Positions 1252-1275 (ELFDDDSDDDSDSGADADVDSENE) are enriched in acidic residues. Residues 1286 to 1318 (ASLQHNDNSSLTNITVTDNDSNLDQDITSNTGS) show a composition bias toward polar residues. Residues 1328 to 1340 (LSSTPTPTTTLSS) are compositionally biased toward low complexity.

Component of the TSET complex, a heterohexamer composed of tstA, tstB, tstC, tstD, tstE and tstF, which may act in plasma membrane turnover. tstA, tstB, tstC and tstD are likely to be the core complex members with tstE and tstF acting as associated scaffold proteins.

The protein is TSET complex member tstE of Dictyostelium discoideum (Social amoeba).